The chain runs to 85 residues: Large ribosomal subunit protein bL27 (85 aa).

Residues 1-20 form a disordered region; sequence MAHKKGASSSRNGRDSNAQR. The span at 7-19 shows a compositional bias: polar residues; that stretch reads ASSSRNGRDSNAQ.

Belongs to the bacterial ribosomal protein bL27 family.

This chain is Large ribosomal subunit protein bL27, found in Kineococcus radiotolerans (strain ATCC BAA-149 / DSM 14245 / SRS30216).